The chain runs to 262 residues: MKNKFGKESRLYIRAKVSDGKTCLQDSYFTAPFKIAKPFYEGHGGFMNLMVMSASAGVMEGDNYRIEVELDKGARVKLEGQSYQKIHRMKNGTAVQYNSFTLADGAFLDYAPNPTIPFADSAFYSNTECRMEEGSAFIYSEILAAGRVKSGEIFRFREYHSGIKIYYGGELIFLENQFLFPKVQNLEGIGFFEGFTHQASMGFFCKQISDELIDKLCVMLTAMEDVQFGLSKTKKYGFVVRILGNSSDRLESILKLIRNILY.

It belongs to the UreD family. In terms of assembly, ureD, UreF and UreG form a complex that acts as a GTP-hydrolysis-dependent molecular chaperone, activating the urease apoprotein by helping to assemble the nickel containing metallocenter of UreC. The UreE protein probably delivers the nickel.

It is found in the cytoplasm. Required for maturation of urease via the functional incorporation of the urease nickel metallocenter. The protein is Urease accessory protein UreD of Acetivibrio thermocellus (strain ATCC 27405 / DSM 1237 / JCM 9322 / NBRC 103400 / NCIMB 10682 / NRRL B-4536 / VPI 7372) (Clostridium thermocellum).